The chain runs to 175 residues: tRNA (cytidine(56)-2'-O)-methyltransferase (175 aa).

Position 83 (L83) interacts with S-adenosyl-L-methionine.

This sequence belongs to the aTrm56 family. Homodimer.

The protein resides in the cytoplasm. The enzyme catalyses cytidine(56) in tRNA + S-adenosyl-L-methionine = 2'-O-methylcytidine(56) in tRNA + S-adenosyl-L-homocysteine + H(+). In terms of biological role, specifically catalyzes the AdoMet-dependent 2'-O-ribose methylation of cytidine at position 56 in tRNAs. The sequence is that of tRNA (cytidine(56)-2'-O)-methyltransferase from Methanosphaera stadtmanae (strain ATCC 43021 / DSM 3091 / JCM 11832 / MCB-3).